The primary structure comprises 290 residues: 4-hydroxybenzoate octaprenyltransferase (290 aa).

The next 6 helical transmembrane spans lie at 41-61 (WPLL…GCAM), 89-109 (WEAV…IQPL), 133-153 (FFAI…PMAF), 158-178 (DTVP…SVAY), 202-224 (FGRF…YVWI), and 269-289 (WLGG…GTAG).

This sequence belongs to the UbiA prenyltransferase family. The cofactor is Mg(2+).

Its subcellular location is the cell inner membrane. The enzyme catalyses all-trans-octaprenyl diphosphate + 4-hydroxybenzoate = 4-hydroxy-3-(all-trans-octaprenyl)benzoate + diphosphate. It participates in cofactor biosynthesis; ubiquinone biosynthesis. In terms of biological role, catalyzes the prenylation of para-hydroxybenzoate (PHB) with an all-trans polyprenyl group. Mediates the second step in the final reaction sequence of ubiquinone-8 (UQ-8) biosynthesis, which is the condensation of the polyisoprenoid side chain with PHB, generating the first membrane-bound Q intermediate 3-octaprenyl-4-hydroxybenzoate. In Burkholderia ambifaria (strain ATCC BAA-244 / DSM 16087 / CCUG 44356 / LMG 19182 / AMMD) (Burkholderia cepacia (strain AMMD)), this protein is 4-hydroxybenzoate octaprenyltransferase.